Consider the following 177-residue polypeptide: Thymidine kinase (177 aa).

11 to 18 (GPMFSGKS) lines the ATP pocket. Catalysis depends on Glu-83, which acts as the Proton acceptor. Phe-113 lines the substrate pocket. Zn(2+) contacts are provided by Cys-138 and Cys-141. Residue 157–161 (IEIIG) coordinates substrate. 2 residues coordinate Zn(2+): Cys-170 and Cys-173.

Belongs to the thymidine kinase family. As to quaternary structure, homotetramer. Two molecules of substrate bind to each enzyme tetramer.

It carries out the reaction thymidine + ATP = dTMP + ADP + H(+). Phosphorylates thymidine and thymidine analogs, such as azidothymidine (AZT). Part of the salvage pathway for pyrimidine deoxyribonucleotide synthesis. The sequence is that of Thymidine kinase (OPG101) from Homo sapiens (Human).